We begin with the raw amino-acid sequence, 102 residues long: uncharacterized protein (102 aa).

This is an uncharacterized protein from Acidianus filamentous virus 1 (isolate United States/Yellowstone) (AFV-1).